The primary structure comprises 425 residues: Serine--tRNA ligase (425 aa).

233–235 contacts L-serine; it reads TAE. Residues 264-266 and Val-280 contribute to the ATP site; that span reads RRE. Glu-287 contributes to the L-serine binding site. Position 351–354 (351–354) interacts with ATP; that stretch reads EVSS. Ser-387 is an L-serine binding site.

It belongs to the class-II aminoacyl-tRNA synthetase family. Type-1 seryl-tRNA synthetase subfamily. As to quaternary structure, homodimer. The tRNA molecule binds across the dimer.

Its subcellular location is the cytoplasm. The catalysed reaction is tRNA(Ser) + L-serine + ATP = L-seryl-tRNA(Ser) + AMP + diphosphate + H(+). It catalyses the reaction tRNA(Sec) + L-serine + ATP = L-seryl-tRNA(Sec) + AMP + diphosphate + H(+). The protein operates within aminoacyl-tRNA biosynthesis; selenocysteinyl-tRNA(Sec) biosynthesis; L-seryl-tRNA(Sec) from L-serine and tRNA(Sec): step 1/1. In terms of biological role, catalyzes the attachment of serine to tRNA(Ser). Is also able to aminoacylate tRNA(Sec) with serine, to form the misacylated tRNA L-seryl-tRNA(Sec), which will be further converted into selenocysteinyl-tRNA(Sec). In Gemmatimonas aurantiaca (strain DSM 14586 / JCM 11422 / NBRC 100505 / T-27), this protein is Serine--tRNA ligase.